The primary structure comprises 479 residues: Anaerobic nitric oxide reductase flavorubredoxin (479 aa).

The segment at 30-210 (LRGSSYNSYL…PFSRLVTPKI (181 aa)) is zinc metallo-hydrolase. Fe cation contacts are provided by H79, E81, D83, H147, D166, and H227. The region spanning 254-393 (ITIFYDTMSN…LCREHGREIA (140 aa)) is the Flavodoxin-like domain. FMN contacts are provided by residues 260–264 (TMSNN) and 342–369 (AFGS…EMSL). Residues 423–474 (GPRMQCSVCQWIYDPAKGEPMQDVAPGTPWSEVPDNFLCPECSLGKDVFEEL) form the Rubredoxin-like domain. Residues C428, C431, C461, and C464 each coordinate Fe cation.

In the N-terminal section; belongs to the zinc metallo-hydrolase group 3 family. As to quaternary structure, homotetramer. Fe cation serves as cofactor. The cofactor is FMN.

It is found in the cytoplasm. It functions in the pathway nitrogen metabolism; nitric oxide reduction. In terms of biological role, anaerobic nitric oxide reductase; uses NADH to detoxify nitric oxide (NO), protecting several 4Fe-4S NO-sensitive enzymes. Has at least 2 reductase partners, only one of which (NorW, flavorubredoxin reductase) has been identified. NO probably binds to the di-iron center; electrons enter from the NorW at rubredoxin and are transferred sequentially to the FMN center and the di-iron center. Also able to function as an aerobic oxygen reductase. The chain is Anaerobic nitric oxide reductase flavorubredoxin from Shigella dysenteriae serotype 1 (strain Sd197).